The chain runs to 211 residues: Protein-L-isoaspartate O-methyltransferase (211 aa).

Ser-60 is a catalytic residue.

Belongs to the methyltransferase superfamily. L-isoaspartyl/D-aspartyl protein methyltransferase family.

Its subcellular location is the cytoplasm. It catalyses the reaction [protein]-L-isoaspartate + S-adenosyl-L-methionine = [protein]-L-isoaspartate alpha-methyl ester + S-adenosyl-L-homocysteine. Catalyzes the methyl esterification of L-isoaspartyl residues in peptides and proteins that result from spontaneous decomposition of normal L-aspartyl and L-asparaginyl residues. It plays a role in the repair and/or degradation of damaged proteins. This Pseudomonas syringae pv. tomato (strain ATCC BAA-871 / DC3000) protein is Protein-L-isoaspartate O-methyltransferase.